The following is a 570-amino-acid chain: Pentatricopeptide repeat-containing protein At1g31430 (570 aa).

PPR repeat units lie at residues serine 10 to proline 44, aspartate 45 to phenylalanine 79, aspartate 80 to arginine 110, aspartate 111 to glutamate 141, aspartate 147 to glutamate 177, serine 181 to cysteine 215, tryptophan 216 to lysine 242, aspartate 243 to proline 277, aspartate 278 to valine 312, aspartate 313 to arginine 343, aspartate 344 to leucine 378, aspartate 379 to proline 414, and lysine 415 to threonine 449. The type E motif stretch occupies residues valine 453 to aspartate 528. The segment at glycine 529–leucine 561 is type E(+) motif.

This sequence belongs to the PPR family. PCMP-E subfamily.

This is Pentatricopeptide repeat-containing protein At1g31430 (PCMP-E55) from Arabidopsis thaliana (Mouse-ear cress).